The following is a 310-amino-acid chain: MILTVTLNPSVDISYPLETLKIDTVNRVKDVSKTAGGKGLNVTRVLYESGDKVTATGFLGGKIGEFIESELEQSPVSPAFYKISGNTRNCIAILHEGNQTEILEQGPTISHEEAEGFLDHYSNLIKQSEVVTISGSLPSGLPNDYYEKLIQLASDEGVAVVLDCSGAPLETVLKSSAKPTAIKPNNEELSQLLGKEVTKDIEELKDVLKESLFSGIEWIVVSLGRNGAFAKHGDVFYKVDIPDIPVVNPVGSGDSTVAGIASALNSKKSDADLLKHAMTLGMLNAQETMTGHVNMTNYETLNSQIGVKEV.

Belongs to the carbohydrate kinase PfkB family. LacC subfamily.

The enzyme catalyses D-tagatofuranose 6-phosphate + ATP = D-tagatofuranose 1,6-bisphosphate + ADP + H(+). It participates in carbohydrate metabolism; D-tagatose 6-phosphate degradation; D-glyceraldehyde 3-phosphate and glycerone phosphate from D-tagatose 6-phosphate: step 1/2. The chain is Tagatose-6-phosphate kinase from Lactococcus lactis subsp. lactis (Streptococcus lactis).